The sequence spans 135 residues: Methylglyoxal synthase (135 aa).

One can recognise an MGS-like domain in the interval 1–135; that stretch reads MPKRRRIALI…AQPDPKEIHA (135 aa). Substrate contacts are provided by residues histidine 12, lysine 16, 38–41, and 58–59; these read TGTT and SG. Residue aspartate 64 is the Proton donor/acceptor of the active site. Histidine 91 contacts substrate.

This sequence belongs to the methylglyoxal synthase family.

It carries out the reaction dihydroxyacetone phosphate = methylglyoxal + phosphate. Catalyzes the formation of methylglyoxal from dihydroxyacetone phosphate. The polypeptide is Methylglyoxal synthase (Ralstonia nicotianae (strain ATCC BAA-1114 / GMI1000) (Ralstonia solanacearum)).